The primary structure comprises 100 residues: Urease subunit gamma 2 (100 aa).

It belongs to the urease gamma subunit family. As to quaternary structure, heterotrimer of UreA (gamma), UreB (beta) and UreC (alpha) subunits. Three heterotrimers associate to form the active enzyme.

It localises to the cytoplasm. The enzyme catalyses urea + 2 H2O + H(+) = hydrogencarbonate + 2 NH4(+). Its pathway is nitrogen metabolism; urea degradation; CO(2) and NH(3) from urea (urease route): step 1/1. Disrupting the ure2 operon has no effect on urease activity or pathogen survival in BALB/c mice when administered orally. In Brucella abortus (strain 2308), this protein is Urease subunit gamma 2.